The sequence spans 129 residues: Ribosome-binding factor A (129 aa).

This sequence belongs to the RbfA family. In terms of assembly, monomer. Binds 30S ribosomal subunits, but not 50S ribosomal subunits or 70S ribosomes.

The protein resides in the cytoplasm. One of several proteins that assist in the late maturation steps of the functional core of the 30S ribosomal subunit. Associates with free 30S ribosomal subunits (but not with 30S subunits that are part of 70S ribosomes or polysomes). Required for efficient processing of 16S rRNA. May interact with the 5'-terminal helix region of 16S rRNA. The sequence is that of Ribosome-binding factor A from Thermomicrobium roseum (strain ATCC 27502 / DSM 5159 / P-2).